Consider the following 127-residue polypeptide: Small ribosomal subunit protein bS6 (127 aa).

This sequence belongs to the bacterial ribosomal protein bS6 family.

Functionally, binds together with bS18 to 16S ribosomal RNA. The sequence is that of Small ribosomal subunit protein bS6 from Buchnera aphidicola subsp. Cinara cedri (strain Cc).